The following is a 437-amino-acid chain: MKLPRIGFISLGCPKALVDSERIITQLRAEGYAIVPTYQDADLVVVNTCGFIDAAVEESLEAIGEAVAENGKVIVTGCLGERPEEIQARHPAVLKVTGAHAYEEVMNAVHEHLPPLHDPFMDLVPPQGVRLTPRHYAYLKISEGCNHRCSFCIIPALRGDLVSRPIGEVMTEAERLVAAGVKEILVVSQDTSAYGADLGYRTGFWGGRPLRTRFQELARALGDLGVWIRLHYVYPYPHVDEVIPLMAEGRLLPYLDIPFQHASARVLKAMKRPAATENILAAIRRWREVCPELTLRSTFIVGFPGETEDEFRELLDFLEEARLDRVGCFEYSPVKGAAANALPDPVPAEVKAERHARLMEVQERISAARLRTRIGRTETVLVDEVVEEGAVARRRADAPEIDGQVFIDGATHLEVGEFVEATFEDADAHDLWARLAD.

The MTTase N-terminal domain occupies 4 to 114 (PRIGFISLGC…VMNAVHEHLP (111 aa)). Positions 13, 49, 78, 145, 149, and 152 each coordinate [4Fe-4S] cluster. The Radical SAM core domain maps to 131–368 (LTPRHYAYLK…MEVQERISAA (238 aa)). A TRAM domain is found at 371–437 (RTRIGRTETV…AHDLWARLAD (67 aa)).

Belongs to the methylthiotransferase family. RimO subfamily. It depends on [4Fe-4S] cluster as a cofactor.

The protein localises to the cytoplasm. It carries out the reaction L-aspartate(89)-[ribosomal protein uS12]-hydrogen + (sulfur carrier)-SH + AH2 + 2 S-adenosyl-L-methionine = 3-methylsulfanyl-L-aspartate(89)-[ribosomal protein uS12]-hydrogen + (sulfur carrier)-H + 5'-deoxyadenosine + L-methionine + A + S-adenosyl-L-homocysteine + 2 H(+). Catalyzes the methylthiolation of an aspartic acid residue of ribosomal protein uS12. This is Ribosomal protein uS12 methylthiotransferase RimO from Methylococcus capsulatus (strain ATCC 33009 / NCIMB 11132 / Bath).